The sequence spans 25 residues: Spinigerin (25 aa).

The protein resides in the secreted. Functionally, active against Gram-positive bacteria B.megaterium and M.luteus, Gram-negative bacteria E.coli SBS363 and D22, K.pneumoniae, S.typhimurium and P.aeruginosa, yeast C.albicans and filamentous fungi F.culmorum, N.crassa, N.hematococca and T.viridae. Inactive against Gram-positive bacteria B.subtilis, S.pyogenes, B.thuringiensis and S.aureus, Gram-negative bacteria E.cloacae and E.carotovora and filamentous fungus B.bassiana. This chain is Spinigerin, found in Pseudacanthotermes spiniger.